A 567-amino-acid chain; its full sequence is Phenylalanine--tRNA ligase beta subunit (567 aa).

Positions Phe284–Pro359 constitute a B5 domain. Mg(2+) is bound by residues Asp337, Asp343, Asp346, and Asp347.

This sequence belongs to the phenylalanyl-tRNA synthetase beta subunit family. Type 2 subfamily. Tetramer of two alpha and two beta subunits. Mg(2+) is required as a cofactor.

It is found in the cytoplasm. It catalyses the reaction tRNA(Phe) + L-phenylalanine + ATP = L-phenylalanyl-tRNA(Phe) + AMP + diphosphate + H(+). The protein is Phenylalanine--tRNA ligase beta subunit of Halobacterium salinarum (strain ATCC 29341 / DSM 671 / R1).